The primary structure comprises 740 residues: MLKLFSAFRKNKIWDFNGGIHPPEMKTQSNGTPLRQVPLAQRFVIPLKQHIGAEGELCVSVGDKVLRGQPLTRGRGKMLPVHAPTSGTVTAIAPHSTAHPSALAELSVIIDADGEDCWIPRDGWADYRTRSREELIERIHQFGVAGLGGAGFPTGVKLQGGGDKIETLIINAAECEPYITADDRLMQDCAAQVVEGIRILAHILQPREILIGIEDNKPQAISMLRAVLADSNDISLRVIPTKYPSGGAKQLTYILTGKQVPHGGRSSDIGVLMQNVGTAYAVKRAVIDGEPITERVVTLTGEAIARPGNVWARLGTPVRHLLNDAGFCPSADQMVIMGGPLMGFTLPWLDVPVVKITNCLLAPSANELGEPQEEQSCIRCSACADACPADLLPQQLYWFSKGQQHDKATTHNIADCIECGACAWVCPSNIPLVQYFRQEKAEIAAIRQEEKRAAEAKARFEARQARLEREKAARLERHKSAAVQPAAKDKDAIAAALARVKEKQAQATQPIVIKAGERPDNSAIIAAREARKAQARAKQAELQQTNDAATVADPRKTAVEAAIARAKARKLEQQQANAEPEEQVDPRKAAVEAAIARAKARKLEQQQANAEPEQQVDPRKAAVEAAIARAKARKLEQQQANAEPEQQVDPRKAAVEAAIARAKARKREQQPANAEPEEQVDPRKAAVEAAIARAKARKLEQQQANAVPEEQVDPRKAAVAAAIARAQAKKAAQQKVVNED.

4Fe-4S ferredoxin-type domains lie at 369 to 397 and 407 to 436; these read GEPQEEQSCIRCSACADACPADLLPQQLY and KATTHNIADCIECGACAWVCPSNIPLVQYF. [4Fe-4S] cluster-binding residues include Cys377, Cys380, Cys383, Cys387, Cys416, Cys419, Cys422, and Cys426. The interval 602–717 is disordered; that stretch reads KLEQQQANAE…PEEQVDPRKA (116 aa). Composition is skewed to low complexity over residues 605-615 and 637-647; these read QQQANAEPEQQ.

This sequence belongs to the 4Fe4S bacterial-type ferredoxin family. RnfC subfamily. As to quaternary structure, the complex is composed of six subunits: RsxA, RsxB, RsxC, RsxD, RsxE and RsxG. The cofactor is [4Fe-4S] cluster.

It localises to the cell inner membrane. Its function is as follows. Part of a membrane-bound complex that couples electron transfer with translocation of ions across the membrane. Required to maintain the reduced state of SoxR. This is Ion-translocating oxidoreductase complex subunit C from Escherichia coli (strain ATCC 8739 / DSM 1576 / NBRC 3972 / NCIMB 8545 / WDCM 00012 / Crooks).